Consider the following 201-residue polypeptide: Segregation and condensation protein B (201 aa).

It belongs to the ScpB family. As to quaternary structure, homodimer. Homodimerization may be required to stabilize the binding of ScpA to the Smc head domains. Component of a cohesin-like complex composed of ScpA, ScpB and the Smc homodimer, in which ScpA and ScpB bind to the head domain of Smc. The presence of the three proteins is required for the association of the complex with DNA.

Its subcellular location is the cytoplasm. In terms of biological role, participates in chromosomal partition during cell division. May act via the formation of a condensin-like complex containing Smc and ScpA that pull DNA away from mid-cell into both cell halves. This Enterococcus faecalis (strain ATCC 700802 / V583) protein is Segregation and condensation protein B.